Reading from the N-terminus, the 254-residue chain is Imidazole glycerol phosphate synthase subunit HisF (254 aa).

Residues aspartate 11 and aspartate 130 contribute to the active site.

The protein belongs to the HisA/HisF family. Heterodimer of HisH and HisF.

Its subcellular location is the cytoplasm. It carries out the reaction 5-[(5-phospho-1-deoxy-D-ribulos-1-ylimino)methylamino]-1-(5-phospho-beta-D-ribosyl)imidazole-4-carboxamide + L-glutamine = D-erythro-1-(imidazol-4-yl)glycerol 3-phosphate + 5-amino-1-(5-phospho-beta-D-ribosyl)imidazole-4-carboxamide + L-glutamate + H(+). The protein operates within amino-acid biosynthesis; L-histidine biosynthesis; L-histidine from 5-phospho-alpha-D-ribose 1-diphosphate: step 5/9. In terms of biological role, IGPS catalyzes the conversion of PRFAR and glutamine to IGP, AICAR and glutamate. The HisF subunit catalyzes the cyclization activity that produces IGP and AICAR from PRFAR using the ammonia provided by the HisH subunit. This chain is Imidazole glycerol phosphate synthase subunit HisF, found in Gloeobacter violaceus (strain ATCC 29082 / PCC 7421).